A 110-amino-acid chain; its full sequence is MHVKTGDEVLIITGKDRGKRGKIKEARPKEQRVIVEGLNIVKRHMKPRGPTRPGGIIEMEAPIHVSNVMLICPTCGRASRTGHRFLEETDHKGRPKKVRYCKACDAVIDE.

Belongs to the universal ribosomal protein uL24 family. In terms of assembly, part of the 50S ribosomal subunit.

Functionally, one of two assembly initiator proteins, it binds directly to the 5'-end of the 23S rRNA, where it nucleates assembly of the 50S subunit. Its function is as follows. One of the proteins that surrounds the polypeptide exit tunnel on the outside of the subunit. In Roseiflexus sp. (strain RS-1), this protein is Large ribosomal subunit protein uL24.